A 473-amino-acid chain; its full sequence is Fumarate hydratase class II (473 aa).

Residues 105–107 (SGT), 130–133 (HPND), 140–142 (SSN), and T188 each bind substrate. The Proton donor/acceptor role is filled by H189. Residue S319 is part of the active site. Substrate contacts are provided by residues S320 and 325-327 (KVN).

The protein belongs to the class-II fumarase/aspartase family. Fumarase subfamily. In terms of assembly, homotetramer.

It localises to the cytoplasm. It catalyses the reaction (S)-malate = fumarate + H2O. It functions in the pathway carbohydrate metabolism; tricarboxylic acid cycle; (S)-malate from fumarate: step 1/1. Involved in the TCA cycle. Catalyzes the stereospecific interconversion of fumarate to L-malate. The polypeptide is Fumarate hydratase class II (Xylella fastidiosa (strain Temecula1 / ATCC 700964)).